The following is a 343-amino-acid chain: MQTKIKKLIAQFHTSLQKNKYDLDKLMILDKEFLGKKGILFELTQELKNLPHAQKSVAGKLINFLKQEIIFTLQKEKETLKRNQLNAKILQEEIDPTLPAFNFCQGSTHPLNQIIEKIEDLFLSLGYEIKEGNEIETLFYNFEMLNMGKGHPAREMQDSFYIDSQKLLRTHTSNIQVKEMKARQGKPLKIISSGKVYRKDDDDATHSHQFMQLEGLVIDKNINFSVLKETLLLITKELFGNSQEIHLRPSYFPFTEPSIEVDLVITKKDGTKEYLEILGAGLVHPQVLKNANYDPEKYQGFAFGIGIERIAMIKYQIENIRYFYANDIRFLKQFARNADNENY.

Residue E256 participates in Mg(2+) binding.

This sequence belongs to the class-II aminoacyl-tRNA synthetase family. Phe-tRNA synthetase alpha subunit type 1 subfamily. In terms of assembly, tetramer of two alpha and two beta subunits. Mg(2+) is required as a cofactor.

The protein resides in the cytoplasm. The catalysed reaction is tRNA(Phe) + L-phenylalanine + ATP = L-phenylalanyl-tRNA(Phe) + AMP + diphosphate + H(+). This chain is Phenylalanine--tRNA ligase alpha subunit, found in Aster yellows witches'-broom phytoplasma (strain AYWB).